We begin with the raw amino-acid sequence, 388 residues long: Succinate--CoA ligase [ADP-forming] subunit beta (388 aa).

Residues Lys-9–His-244 form the ATP-grasp domain. ATP contacts are provided by residues Lys-46, Gly-53–Gly-55, Glu-99, Thr-102, and Glu-107. Residues Asn-199 and Asp-213 each contribute to the Mg(2+) site. Substrate contacts are provided by residues Asn-264 and Gly-321–Val-323.

It belongs to the succinate/malate CoA ligase beta subunit family. In terms of assembly, heterotetramer of two alpha and two beta subunits. Mg(2+) is required as a cofactor.

It carries out the reaction succinate + ATP + CoA = succinyl-CoA + ADP + phosphate. The catalysed reaction is GTP + succinate + CoA = succinyl-CoA + GDP + phosphate. The protein operates within carbohydrate metabolism; tricarboxylic acid cycle; succinate from succinyl-CoA (ligase route): step 1/1. Succinyl-CoA synthetase functions in the citric acid cycle (TCA), coupling the hydrolysis of succinyl-CoA to the synthesis of either ATP or GTP and thus represents the only step of substrate-level phosphorylation in the TCA. The beta subunit provides nucleotide specificity of the enzyme and binds the substrate succinate, while the binding sites for coenzyme A and phosphate are found in the alpha subunit. The polypeptide is Succinate--CoA ligase [ADP-forming] subunit beta (Shewanella sp. (strain MR-4)).